A 268-amino-acid polypeptide reads, in one-letter code: Undecaprenyl-diphosphatase (268 aa).

The next 8 helical transmembrane spans lie at 3-23, 46-66, 84-104, 107-127, 144-164, 184-204, 218-238, and 248-268; these read VFNL…EFIP, FEVL…SAKL, FGIL…HGFI, VLFE…FILL, YPLP…IPGV, AAEF…AYDL, LIGV…RYLL, and LFGW…LVWG.

The protein belongs to the UppP family.

Its subcellular location is the cell inner membrane. The catalysed reaction is di-trans,octa-cis-undecaprenyl diphosphate + H2O = di-trans,octa-cis-undecaprenyl phosphate + phosphate + H(+). In terms of biological role, catalyzes the dephosphorylation of undecaprenyl diphosphate (UPP). Confers resistance to bacitracin. The sequence is that of Undecaprenyl-diphosphatase from Brucella anthropi (strain ATCC 49188 / DSM 6882 / CCUG 24695 / JCM 21032 / LMG 3331 / NBRC 15819 / NCTC 12168 / Alc 37) (Ochrobactrum anthropi).